Consider the following 90-residue polypeptide: Probable Fe(2+)-trafficking protein (90 aa).

The protein belongs to the Fe(2+)-trafficking protein family.

Functionally, could be a mediator in iron transactions between iron acquisition and iron-requiring processes, such as synthesis and/or repair of Fe-S clusters in biosynthetic enzymes. This Acinetobacter baylyi (strain ATCC 33305 / BD413 / ADP1) protein is Probable Fe(2+)-trafficking protein.